The sequence spans 257 residues: Imidazole glycerol phosphate synthase subunit HisF (257 aa).

Catalysis depends on residues aspartate 11 and aspartate 130.

It belongs to the HisA/HisF family. In terms of assembly, heterodimer of HisH and HisF.

Its subcellular location is the cytoplasm. The catalysed reaction is 5-[(5-phospho-1-deoxy-D-ribulos-1-ylimino)methylamino]-1-(5-phospho-beta-D-ribosyl)imidazole-4-carboxamide + L-glutamine = D-erythro-1-(imidazol-4-yl)glycerol 3-phosphate + 5-amino-1-(5-phospho-beta-D-ribosyl)imidazole-4-carboxamide + L-glutamate + H(+). The protein operates within amino-acid biosynthesis; L-histidine biosynthesis; L-histidine from 5-phospho-alpha-D-ribose 1-diphosphate: step 5/9. IGPS catalyzes the conversion of PRFAR and glutamine to IGP, AICAR and glutamate. The HisF subunit catalyzes the cyclization activity that produces IGP and AICAR from PRFAR using the ammonia provided by the HisH subunit. The chain is Imidazole glycerol phosphate synthase subunit HisF from Aeromonas salmonicida (strain A449).